Consider the following 513-residue polypeptide: Sphingolipid C9-methyltransferase 1 (513 aa).

2 consecutive transmembrane segments (helical) span residues 63 to 83 (FLVA…GGGL) and 85 to 105 (TAIF…WTVM). Residues 228–229 (YT), 265–273 (LLDIGCGWG), 291–296 (TLARNQ), and 321–322 (YR) contribute to the S-adenosyl-L-methionine site.

The protein belongs to the CFA/CMAS family.

It is found in the membrane. It catalyses the reaction a (4E,8E)-4-sphinga-4,8-dienine ceramide + S-adenosyl-L-methionine = a 9-methyl-(4E,8E)-sphinga-4,8-dienine ceramide + S-adenosyl-L-homocysteine + H(+). The protein operates within lipid metabolism; sphingolipid metabolism. Functionally, catalyzes methylation of the sphingoid base component of glucosylceramides (GluCers) at the C9-position. Sphingolipid C9-methylation requires 4,8-desaturated ceramides as substrates. Glucosylceramides play important roles in the growth, differentiation and pathogenicity. The methyl group at the C9-position distinguishes fungal glucosylceramides from those of plants and animals, and may thus play a role in host-pathogen interactions enabling the host to recognize the fungal attack and initiate specific defense responses. However, C-9 methylation of GlcCers is not essential for the sensitivity of F.graminearum to plant defensins MsDef1 and RsAFP2. This Gibberella zeae (strain ATCC MYA-4620 / CBS 123657 / FGSC 9075 / NRRL 31084 / PH-1) (Wheat head blight fungus) protein is Sphingolipid C9-methyltransferase 1.